The primary structure comprises 341 residues: Phenylalanine--tRNA ligase alpha subunit (341 aa).

E256 lines the Mg(2+) pocket.

Belongs to the class-II aminoacyl-tRNA synthetase family. Phe-tRNA synthetase alpha subunit type 1 subfamily. As to quaternary structure, tetramer of two alpha and two beta subunits. Mg(2+) serves as cofactor.

The protein localises to the cytoplasm. The enzyme catalyses tRNA(Phe) + L-phenylalanine + ATP = L-phenylalanyl-tRNA(Phe) + AMP + diphosphate + H(+). This is Phenylalanine--tRNA ligase alpha subunit from Leptospira borgpetersenii serovar Hardjo-bovis (strain JB197).